The following is a 416-amino-acid chain: ATP-dependent Clp protease ATP-binding subunit ClpX (416 aa).

Residues 1–54 (MFKFGDEKGQLKCSFCGKSQEQVRKLVAGPGVYICDECIELCNEIIEEELNDDV) enclose the ClpX-type ZB domain. Zn(2+) contacts are provided by C13, C16, C35, and C38. ATP is bound at residue 117–124 (PTGCGKTL).

It belongs to the ClpX chaperone family. In terms of assembly, component of the ClpX-ClpP complex. Forms a hexameric ring that, in the presence of ATP, binds to fourteen ClpP subunits assembled into a disk-like structure with a central cavity, resembling the structure of eukaryotic proteasomes.

Its function is as follows. ATP-dependent specificity component of the Clp protease. It directs the protease to specific substrates. Can perform chaperone functions in the absence of ClpP. The polypeptide is ATP-dependent Clp protease ATP-binding subunit ClpX (Halothermothrix orenii (strain H 168 / OCM 544 / DSM 9562)).